The chain runs to 198 residues: Recombination protein RecR (198 aa).

Residues Cys-58–Cys-73 form a C4-type zinc finger. The 95-residue stretch at Ser-81 to Pro-175 folds into the Toprim domain.

Belongs to the RecR family.

Functionally, may play a role in DNA repair. It seems to be involved in an RecBC-independent recombinational process of DNA repair. It may act with RecF and RecO. This is Recombination protein RecR from Clostridium kluyveri (strain NBRC 12016).